The chain runs to 372 residues: Septin-1 (372 aa).

Residues 27–301 (KGFDFTLMVA…EGYRARCLQS (275 aa)) form the Septin-type G domain. Residues 37 to 44 (GESGLGKS) form a G1 motif region. GTP is bound by residues 37–44 (GESGLGKS), T71, G97, and 176–184 (KADALMPQE). A G3 motif region spans residues 94-97 (DTPG). Positions 175-178 (GKAD) are G4 motif. Residue S211 is modified to Phosphoserine. GTP contacts are provided by G234 and R250. S253 carries the phosphoserine; by AURKB modification. The residue at position 256 (T256) is a Phosphothreonine. Residues S312 and S320 each carry the phosphoserine; by AURKB modification. The disordered stretch occupies residues 352–372 (LEKMQAQMQQSQAQGEQSDAL). Residues 355 to 372 (MQAQMQQSQAQGEQSDAL) are compositionally biased toward low complexity.

This sequence belongs to the TRAFAC class TrmE-Era-EngA-EngB-Septin-like GTPase superfamily. Septin GTPase family. In terms of assembly, septins polymerize into heterooligomeric protein complexes that form filaments, and can associate with cellular membranes, actin filaments and microtubules. GTPase activity is required for filament formation. Interacts with AURKB. Expressed at high levels in lymphoid and hematopoietic tissues.

The protein resides in the cytoplasm. Its subcellular location is the cytoskeleton. It localises to the microtubule organizing center. The protein localises to the centrosome. It is found in the midbody. Filament-forming cytoskeletal GTPase. May play a role in cytokinesis (Potential). This chain is Septin-1, found in Homo sapiens (Human).